Here is a 97-residue protein sequence, read N- to C-terminus: Large ribosomal subunit protein bL28 (97 aa).

The protein belongs to the bacterial ribosomal protein bL28 family.

This Nitrobacter winogradskyi (strain ATCC 25391 / DSM 10237 / CIP 104748 / NCIMB 11846 / Nb-255) protein is Large ribosomal subunit protein bL28.